Consider the following 171-residue polypeptide: Transcription antitermination protein NusB (171 aa).

This sequence belongs to the NusB family.

In terms of biological role, involved in transcription antitermination. Required for transcription of ribosomal RNA (rRNA) genes. Binds specifically to the boxA antiterminator sequence of the ribosomal RNA (rrn) operons. This is Transcription antitermination protein NusB from Brucella suis (strain ATCC 23445 / NCTC 10510).